Here is a 729-residue protein sequence, read N- to C-terminus: Heterogeneous nuclear ribonucleoprotein M (729 aa).

Low complexity predominate over residues 1–13 (MAAGVEAAAEVAA). Positions 1 to 65 (MAAGVEAAAE…GGNRFEPYSN (65 aa)) are disordered. Alanine 2 carries the post-translational modification N-acetylalanine. Lysine 17 is covalently cross-linked (Glycyl lysine isopeptide (Lys-Gly) (interchain with G-Cter in SUMO2)). The residue at position 29 (serine 29) is a Phosphoserine. Residues lysine 37, lysine 68, and lysine 82 each participate in a glycyl lysine isopeptide (Lys-Gly) (interchain with G-Cter in SUMO2) cross-link. Residues 37–49 (KGEERPTQNEKRK) are compositionally biased toward basic and acidic residues. RRM domains lie at 70–148 (YRAF…EDPD) and 203–280 (STVF…MDER). The residue at position 85 (serine 85) is a Phosphoserine. Residues lysine 87 and lysine 126 each participate in a glycyl lysine isopeptide (Lys-Gly) (interchain with G-Cter in SUMO2) cross-link. Lysine 133 carries the N6-acetyllysine; alternate modification. Residue lysine 133 forms a Glycyl lysine isopeptide (Lys-Gly) (interchain with G-Cter in SUMO2); alternate linkage. Residues lysine 142 and lysine 144 each participate in a glycyl lysine isopeptide (Lys-Gly) (interchain with G-Cter in SUMO2) cross-link. The residue at position 203 (serine 203) is a Phosphoserine. Residue lysine 220 forms a Glycyl lysine isopeptide (Lys-Gly) (interchain with G-Cter in SUMO2) linkage. An N6-acetyllysine; alternate modification is found at lysine 276. Lysine 276 participates in a covalent cross-link: Glycyl lysine isopeptide (Lys-Gly) (interchain with G-Cter in SUMO2); alternate. Residues lysine 284 and lysine 344 each participate in a glycyl lysine isopeptide (Lys-Gly) (interchain with G-Cter in SUMO2) cross-link. A phosphoserine mark is found at serine 364 and serine 376. Residues lysine 380 and lysine 387 each participate in a glycyl lysine isopeptide (Lys-Gly) (interchain with G-Cter in SUMO2) cross-link. Serine 396 bears the Phosphoserine mark. Tandem repeats lie at residues 399–404 (GIERMG), 406–411 (GIDRIS), 414–419 (GMERMG), and 425–430 (GMDRVG). The segment at 399-607 (GIERMGPGID…ALGAGIERMG (209 aa)) is 27 X 6 AA repeats of [GEVSTPAN]-[ILMV]-[DE]-[RH]-[MLVI]-[GAV]. Serine 431 bears the Phosphoserine mark. 3 repeat units span residues 432-437 (EIERMG), 439-444 (VMDRMG), and 445-450 (SVERMG). Serine 451 carries the post-translational modification Phosphoserine. 4 consecutive repeat copies span residues 452–457 (SIERMG), 460–465 (GLDHMA), 467–472 (SIERMG), and 474–479 (TMERIG). Residue serine 467 is modified to Phosphoserine. Serine 480 carries the phosphoserine modification. 16 repeat units span residues 481–486 (GVERMG), 492–497 (GLERMA), 499–504 (PIDRVG), 506–511 (TIERMG), 513–518 (GVERMG), 520–525 (AIERMG), 527–532 (SMDRMV), 539–544 (SLERMG), 546–551 (VMDRMA), 553–558 (GLERMG), 561–566 (NLERMG), 567–571 (LERMG), 574–579 (SLERMG), 580–584 (LERMG), 587–592 (SLERMG), and 602–607 (GIERMG). Arginine 495 carries the post-translational modification Omega-N-methylarginine. Position 527 is a phosphoserine (serine 527). Phosphoserine is present on serine 574. At serine 587 the chain carries Phosphoserine. A phosphoserine mark is found at serine 617, serine 632, and serine 636. Lysine 650 participates in a covalent cross-link: Glycyl lysine isopeptide (Lys-Gly) (interchain with G-Cter in SUMO2). In terms of domain architecture, RRM 3 spans 652–728 (CQIFVRNLPF…REIDVRIDRN (77 aa)). At threonine 664 the chain carries Phosphothreonine. Lysine 666 participates in a covalent cross-link: Glycyl lysine isopeptide (Lys-Gly) (interchain with G-Cter in SUMO2). Position 671 is an N6-acetyllysine (lysine 671). Glycyl lysine isopeptide (Lys-Gly) (interchain with G-Cter in SUMO2) cross-links involve residues lysine 684 and lysine 691. At lysine 697 the chain carries N6-acetyllysine; alternate. Lysine 697 participates in a covalent cross-link: Glycyl lysine isopeptide (Lys-Gly) (interchain with G-Cter in SUMO2); alternate. Lysine 697 participates in a covalent cross-link: Glycyl lysine isopeptide (Lys-Gly) (interchain with G-Cter in SUMO1); alternate. Position 700 is a phosphoserine (serine 700). Lysine 715 is covalently cross-linked (Glycyl lysine isopeptide (Lys-Gly) (interchain with G-Cter in SUMO2)).

As to quaternary structure, identified in the spliceosome C complex. Interacts with PPIA/CYPA. In terms of processing, sumoylated.

It localises to the nucleus. Its function is as follows. Pre-mRNA binding protein in vivo, binds avidly to poly(G) and poly(U) RNA homopolymers in vitro. Involved in splicing. Acts as a receptor for carcinoembryonic antigen in Kupffer cells, may initiate a series of signaling events leading to tyrosine phosphorylation of proteins and induction of IL-1 alpha, IL-6, IL-10 and tumor necrosis factor alpha cytokines. The protein is Heterogeneous nuclear ribonucleoprotein M (Hnrnpm) of Mus musculus (Mouse).